A 277-amino-acid chain; its full sequence is Caspase-3 (277 aa).

The residue at position 1 (Met1) is an N-acetylmethionine. 2 propeptides span residues 1–9 (MENTENSVD) and 10–28 (SKSI…QSMD). Residues 1 to 10 (MENTENSVDS) show a composition bias toward polar residues. Residues 1–20 (MENTENSVDSKSIKNLEPKI) form a disordered region. Lys11 carries the post-translational modification N6-acetyllysine. Residues 11-20 (KSIKNLEPKI) are compositionally biased toward basic and acidic residues. Ser26 is subject to Phosphoserine. Residues His121 and Cys163 contribute to the active site. Cys163 bears the S-nitrosocysteine; in inhibited form mark.

This sequence belongs to the peptidase C14A family. In terms of assembly, heterotetramer that consists of two anti-parallel arranged heterodimers, each one formed by a 17 kDa (p17) and a 12 kDa (p12) subunit. Interacts with BIRC6/bruce. In terms of processing, cleavage by granzyme B, caspase-6, caspase-8 and caspase-10 generates the two active subunits. Additional processing of the propeptides is likely due to the autocatalytic activity of the activated protease. Active heterodimers between the small subunit of caspase-7 protease and the large subunit of caspase-3 also occur and vice versa. S-nitrosylated on its catalytic site cysteine in unstimulated cell lines and denitrosylated upon activation of the Fas apoptotic pathway, associated with an increase in intracellular caspase activity. Fas therefore activates caspase-3 not only by inducing the cleavage of the caspase zymogen to its active subunits, but also by stimulating the denitrosylation of its active site thiol. Post-translationally, ubiquitinated by BIRC6; this activity is inhibited by DIABLO/SMAC.

The protein localises to the cytoplasm. It carries out the reaction Strict requirement for an Asp residue at positions P1 and P4. It has a preferred cleavage sequence of Asp-Xaa-Xaa-Asp-|- with a hydrophobic amino-acid residue at P2 and a hydrophilic amino-acid residue at P3, although Val or Ala are also accepted at this position.. Its activity is regulated as follows. Inhibited by BIRC6; following inhibition of BIRC6-caspase binding by DIABLO/SMAC, BIRC6 is subjected to caspase cleavage, leading to an increase in active caspases. In terms of biological role, involved in the activation cascade of caspases responsible for apoptosis execution. At the onset of apoptosis, it proteolytically cleaves poly(ADP-ribose) polymerase PARP1 at a '216-Asp-|-Gly-217' bond. Cleaves and activates sterol regulatory element binding proteins (SREBPs) between the basic helix-loop-helix leucine zipper domain and the membrane attachment domain. Cleaves and activates caspase-6, -7 and -9 (CASP6, CASP7 and CASP9, respectively). Cleaves and inactivates interleukin-18 (IL18). Triggers cell adhesion in sympathetic neurons through RET cleavage. Cleaves IL-1 beta between an Asp and an Ala, releasing the mature cytokine which is involved in a variety of inflammatory processes. Cleaves and inhibits serine/threonine-protein kinase AKT1 in response to oxidative stress. Acts as an inhibitor of type I interferon production during virus-induced apoptosis by mediating cleavage of antiviral proteins CGAS, IRF3 and MAVS, thereby preventing cytokine overproduction. Also involved in pyroptosis by mediating cleavage and activation of gasdermin-E (GSDME). Cleaves XRCC4 and phospholipid scramblase proteins XKR4, XKR8 and XKR9, leading to promote phosphatidylserine exposure on apoptotic cell surface. Cleaves BIRC6 following inhibition of BIRC6-caspase binding by DIABLO/SMAC. The polypeptide is Caspase-3 (CASP3) (Pan troglodytes (Chimpanzee)).